Here is a 361-residue protein sequence, read N- to C-terminus: Histidinol-phosphate aminotransferase (361 aa).

Lys219 carries the N6-(pyridoxal phosphate)lysine modification.

This sequence belongs to the class-II pyridoxal-phosphate-dependent aminotransferase family. Histidinol-phosphate aminotransferase subfamily. Homodimer. Pyridoxal 5'-phosphate is required as a cofactor.

It catalyses the reaction L-histidinol phosphate + 2-oxoglutarate = 3-(imidazol-4-yl)-2-oxopropyl phosphate + L-glutamate. The protein operates within amino-acid biosynthesis; L-histidine biosynthesis; L-histidine from 5-phospho-alpha-D-ribose 1-diphosphate: step 7/9. The sequence is that of Histidinol-phosphate aminotransferase from Acinetobacter baumannii (strain ATCC 17978 / DSM 105126 / CIP 53.77 / LMG 1025 / NCDC KC755 / 5377).